A 466-amino-acid chain; its full sequence is MIPVTSFAGQSVAVFGLGGSGLASCHALRAGGAEVIACDDNLDRMVEAAQANFITADLRNLPWMNFAALVLTPGVPLTHPTPHWSVLKAREAGVEVIGDVELFCRERRLHAPNAPFVAITGTNGKSTTTALIAHLMRQAGYDTQMGGNIGTAILSLEPPRAGRVHVIEMSSYQIDLTPSLDPSVGILLNVTEDHIDRHGTIEHYAAVKERLVAGVQDGGTAIIGVDDGFGRDAADRLERAGKRVVRISVKQPLASGITADRETIVQADGGASHEVAKLDGIGSLRGLHNAQNAAAAAAAALALGVGPDVLQNGLRSFPGLAHRMEQVGRQGTTLFVNDSKGTNADATAKALSSFGEIFWIAGGKPKTGGIDSLAEYFPRIRKAYLIGEAAQEFAATLEGRVPYEISVTLDNAVPAAARDAASSGLPEPVVLLSPACASFDQFRNFEIRGTKFRDLVTALDGVKPVA.

121–127 is an ATP binding site; the sequence is GTNGKST.

The protein belongs to the MurCDEF family.

It is found in the cytoplasm. The catalysed reaction is UDP-N-acetyl-alpha-D-muramoyl-L-alanine + D-glutamate + ATP = UDP-N-acetyl-alpha-D-muramoyl-L-alanyl-D-glutamate + ADP + phosphate + H(+). It participates in cell wall biogenesis; peptidoglycan biosynthesis. Cell wall formation. Catalyzes the addition of glutamate to the nucleotide precursor UDP-N-acetylmuramoyl-L-alanine (UMA). The chain is UDP-N-acetylmuramoylalanine--D-glutamate ligase from Rhodopseudomonas palustris (strain HaA2).